The sequence spans 132 residues: Small ribosomal subunit protein uS11c (132 aa).

This sequence belongs to the universal ribosomal protein uS11 family. As to quaternary structure, part of the 30S ribosomal subunit.

Its subcellular location is the plastid. It localises to the chloroplast. The chain is Small ribosomal subunit protein uS11c from Cryptomeria japonica (Japanese cedar).